A 162-amino-acid polypeptide reads, in one-letter code: Selenoprotein F (162 aa).

The signal sequence occupies residues 1–28; sequence MAARRDGWLGPAFGLRLLLATVLQTVSA. A non-standard amino acid (selenocysteine) is located at residue U93.

Belongs to the selenoprotein M/F family. Forms a tight complex with UGGT1/UGCGL1. Interacts with UGGT2/UGCGL2. Interacts with RDH11.

The protein localises to the endoplasmic reticulum lumen. May be involved in redox reactions associated with the formation of disulfide bonds. May contribute to the quality control of protein folding in the endoplasmic reticulum. May regulate protein folding by enhancing the catalytic activity of UGGT1/UGCGL1 and UGGT2/UGCGL2. This is Selenoprotein F from Bos taurus (Bovine).